The following is a 48-amino-acid chain: Cytochrome b559 subunit beta (48 aa).

The helical transmembrane segment at 23-39 threads the bilayer; that stretch reads WLAVHALAIPSVFFLGS. Residue His27 participates in heme binding.

This sequence belongs to the PsbE/PsbF family. Heterodimer of an alpha subunit and a beta subunit. PSII is composed of 1 copy each of membrane proteins PsbA, PsbB, PsbC, PsbD, PsbE, PsbF, PsbH, PsbI, PsbJ, PsbK, PsbL, PsbM, PsbT, PsbX, PsbY, Psb30/Ycf12, peripheral proteins PsbO, CyanoQ (PsbQ), PsbU, PsbV and a large number of cofactors. It forms dimeric complexes. Heme b is required as a cofactor.

It is found in the cellular thylakoid membrane. Its function is as follows. This b-type cytochrome is tightly associated with the reaction center of photosystem II (PSII). PSII is a light-driven water:plastoquinone oxidoreductase that uses light energy to abstract electrons from H(2)O, generating O(2) and a proton gradient subsequently used for ATP formation. It consists of a core antenna complex that captures photons, and an electron transfer chain that converts photonic excitation into a charge separation. The sequence is that of Cytochrome b559 subunit beta from Prochlorococcus marinus (strain MIT 9301).